A 2517-amino-acid polypeptide reads, in one-letter code: Serine/threonine-protein kinase ATR (2517 aa).

An HEAT repeat occupies E1178–D1214. The region spanning L1509–S2066 is the FAT domain. A Phosphoserine modification is found at S1569. The residue at position 1570 (Y1570) is a Phosphotyrosine. Residue S1573 is modified to Phosphoserine. T1575 is modified (phosphothreonine). In terms of domain architecture, PI3K/PI4K catalytic spans F2184–S2508. The G-loop stretch occupies residues I2190–K2196. The segment at G2360–N2368 is catalytic loop. The tract at residues H2380–T2404 is activation loop. The FATC domain maps to I2485–L2517.

The protein belongs to the PI3/PI4-kinase family. ATM subfamily. Interacts with mus304. It depends on Mn(2+) as a cofactor.

The protein resides in the nucleus. It catalyses the reaction L-seryl-[protein] + ATP = O-phospho-L-seryl-[protein] + ADP + H(+). The catalysed reaction is L-threonyl-[protein] + ATP = O-phospho-L-threonyl-[protein] + ADP + H(+). Serine/threonine protein kinase which activates checkpoint signaling upon genotoxic stresses such as ionizing radiation (IR), ultraviolet light (UV), or DNA replication stalling, thereby acting as a DNA damage sensor. Recognizes the substrate consensus sequence [ST]-Q. Phosphorylates various proteins, which collectively inhibits DNA replication and mitosis and promotes DNA repair and recombination. Phosphorylates grp/CHK1. Phosphorylates 'Ser-137' of histone variant H2AX/H2AV at sites of DNA damage, thereby regulating DNA damage response mechanism. Essential for the DNA damage checkpoint in larval imaginal disks and neuroblasts and for the DNA replication checkpoint in the embryo. Also has an essential role during early nuclear divisions in embryos, where it is required to delay mitosis in response to incomplete DNA replication. Also plays an important role during meiosis, where it may monitor double-strand-break repair during meiotic crossing over, to regulate the progression of prophase I, and to enforce metaphase I delay observed at the end of oogenesis. Involved in telomere maintenance and prevention of telomere fusion; potentially functioning downstream of moi/modigliani. The protein is Serine/threonine-protein kinase ATR (mei-41) of Drosophila melanogaster (Fruit fly).